The chain runs to 134 residues: uncharacterized protein (134 aa).

The protein belongs to the orthopoxviruses B21 protein family.

This is an uncharacterized protein from Bos taurus (Bovine).